A 258-amino-acid polypeptide reads, in one-letter code: 4-hydroxy-tetrahydrodipicolinate reductase (258 aa).

NAD(+) contacts are provided by residues 8-13 (GGSGKM), 86-88 (GTT), and 110-113 (ATNM). His142 serves as the catalytic Proton donor/acceptor. Position 143 (His143) interacts with (S)-2,3,4,5-tetrahydrodipicolinate. Lys146 (proton donor) is an active-site residue. 152–153 (GT) contributes to the (S)-2,3,4,5-tetrahydrodipicolinate binding site.

It belongs to the DapB family.

The protein localises to the cytoplasm. It carries out the reaction (S)-2,3,4,5-tetrahydrodipicolinate + NAD(+) + H2O = (2S,4S)-4-hydroxy-2,3,4,5-tetrahydrodipicolinate + NADH + H(+). The enzyme catalyses (S)-2,3,4,5-tetrahydrodipicolinate + NADP(+) + H2O = (2S,4S)-4-hydroxy-2,3,4,5-tetrahydrodipicolinate + NADPH + H(+). It functions in the pathway amino-acid biosynthesis; L-lysine biosynthesis via DAP pathway; (S)-tetrahydrodipicolinate from L-aspartate: step 4/4. Its function is as follows. Catalyzes the conversion of 4-hydroxy-tetrahydrodipicolinate (HTPA) to tetrahydrodipicolinate. The protein is 4-hydroxy-tetrahydrodipicolinate reductase of Campylobacter hominis (strain ATCC BAA-381 / DSM 21671 / CCUG 45161 / LMG 19568 / NCTC 13146 / CH001A).